Consider the following 297-residue polypeptide: Mycothiol acetyltransferase (297 aa).

N-acetyltransferase domains lie at 8-153 (DALD…PPLP) and 156-297 (VALR…QYAL). Glutamate 36 serves as a coordination point for 1D-myo-inositol 2-(L-cysteinylamino)-2-deoxy-alpha-D-glucopyranoside. 80–82 (LAV) lines the acetyl-CoA pocket. Residues glutamate 183, lysine 223, and glutamate 231 each coordinate 1D-myo-inositol 2-(L-cysteinylamino)-2-deoxy-alpha-D-glucopyranoside. Acetyl-CoA-binding positions include 235–237 (VGV) and 242–248 (QGGGLGK). Tyrosine 269 serves as a coordination point for 1D-myo-inositol 2-(L-cysteinylamino)-2-deoxy-alpha-D-glucopyranoside. 274–279 (NSPAVR) provides a ligand contact to acetyl-CoA.

This sequence belongs to the acetyltransferase family. MshD subfamily. In terms of assembly, monomer.

It catalyses the reaction 1D-myo-inositol 2-(L-cysteinylamino)-2-deoxy-alpha-D-glucopyranoside + acetyl-CoA = mycothiol + CoA + H(+). Functionally, catalyzes the transfer of acetyl from acetyl-CoA to desacetylmycothiol (Cys-GlcN-Ins) to form mycothiol. The polypeptide is Mycothiol acetyltransferase (Actinosynnema mirum (strain ATCC 29888 / DSM 43827 / JCM 3225 / NBRC 14064 / NCIMB 13271 / NRRL B-12336 / IMRU 3971 / 101)).